The sequence spans 229 residues: Urease accessory protein UreF (229 aa).

Belongs to the UreF family. In terms of assembly, ureD, UreF and UreG form a complex that acts as a GTP-hydrolysis-dependent molecular chaperone, activating the urease apoprotein by helping to assemble the nickel containing metallocenter of UreC. The UreE protein probably delivers the nickel.

It localises to the cytoplasm. Its function is as follows. Required for maturation of urease via the functional incorporation of the urease nickel metallocenter. The protein is Urease accessory protein UreF of Ralstonia pickettii (strain 12J).